The sequence spans 368 residues: 1-deoxy-D-xylulose 5-phosphate reductoisomerase (368 aa).

NADPH is bound by residues T7, G8, S9, I10, G31, K32, N33, and N113. K114 is a binding site for 1-deoxy-D-xylulose 5-phosphate. E115 lines the NADPH pocket. Residue D133 coordinates Mn(2+). 1-deoxy-D-xylulose 5-phosphate is bound by residues S134, E135, S158, and H181. Mn(2+) is bound at residue E135. Position 187 (G187) interacts with NADPH. 1-deoxy-D-xylulose 5-phosphate-binding residues include S194, N199, K200, and E203. E203 provides a ligand contact to Mn(2+).

This sequence belongs to the DXR family. Mg(2+) serves as cofactor. The cofactor is Mn(2+).

The catalysed reaction is 2-C-methyl-D-erythritol 4-phosphate + NADP(+) = 1-deoxy-D-xylulose 5-phosphate + NADPH + H(+). It participates in isoprenoid biosynthesis; isopentenyl diphosphate biosynthesis via DXP pathway; isopentenyl diphosphate from 1-deoxy-D-xylulose 5-phosphate: step 1/6. In terms of biological role, catalyzes the NADPH-dependent rearrangement and reduction of 1-deoxy-D-xylulose-5-phosphate (DXP) to 2-C-methyl-D-erythritol 4-phosphate (MEP). This is 1-deoxy-D-xylulose 5-phosphate reductoisomerase from Helicobacter pylori (strain Shi470).